The chain runs to 299 residues: Ankyrin repeat domain-containing protein 54 (299 aa).

Residues 1-27 (MAATGGGADDESRSGRSSSDGECAVAP) are disordered. Ala2 is subject to N-acetylalanine. The residue at position 62 (Ser62) is a Phosphoserine. The short motif at 98 to 116 (RRLGPTGKEVHALKRLRDS) is the Nuclear localization signal (NLS) element. 4 ANK repeats span residues 108-137 (HALK…DPCA), 141-170 (KGRT…DPNQ), 174-203 (LGNT…RVDA), and 207-239 (AGRT…EVKQ). The interval 140–240 (DKGRTALHFA…EAVRLEVKQI (101 aa)) is LYN-binding. The short motif at 282-292 (LLASFTSLSLQ) is the Nuclear export signal (NES) element.

Interacts (via ankyrin repeat region) with LYN (via SH3-domain) in an activation-independent status of LYN. Forms a multiprotein complex with LYN and HCLS1. Interacts with TSN2, VAV1, DBNL and LASP1. In terms of tissue distribution, expressed in a variety of hemopoietic cell lines and tissue with high levels in testis. Highly expressed in ciliated cells.

Its subcellular location is the nucleus. It is found in the cytoplasm. The protein resides in the midbody. Its function is as follows. Plays an important role in regulating intracellular signaling events associated with erythroid terminal differentiation. This Mus musculus (Mouse) protein is Ankyrin repeat domain-containing protein 54 (Ankrd54).